A 230-amino-acid polypeptide reads, in one-letter code: Iron-dependent repressor IdeR (230 aa).

The region spanning 4–65 (LVDTTEMYLR…VAGNRHLELT (62 aa)) is the HTH dtxR-type domain.

It belongs to the DtxR/MntR family. Homodimer.

The protein localises to the cytoplasm. Functionally, metal-dependent DNA-binding protein that controls transcription of many genes involved in iron metabolism. The polypeptide is Iron-dependent repressor IdeR (ideR) (Mycobacterium leprae (strain TN)).